The primary structure comprises 545 residues: Membrane protein insertase YidC (545 aa).

A run of 4 helical transmembrane segments spans residues 350–370, 424–444, 461–481, and 498–518; these read IIGN…AVLY, LPML…FASV, ADPY…QTYL, and PLVF…YWVV.

This sequence belongs to the OXA1/ALB3/YidC family. Type 1 subfamily. Interacts with the Sec translocase complex via SecD. Specifically interacts with transmembrane segments of nascent integral membrane proteins during membrane integration.

The protein localises to the cell inner membrane. Required for the insertion and/or proper folding and/or complex formation of integral membrane proteins into the membrane. Involved in integration of membrane proteins that insert both dependently and independently of the Sec translocase complex, as well as at least some lipoproteins. Aids folding of multispanning membrane proteins. This is Membrane protein insertase YidC from Neisseria gonorrhoeae (strain ATCC 700825 / FA 1090).